A 125-amino-acid chain; its full sequence is MKVLEDLYYSKDHVWVKVEGDKAYIGITDYAQDSLGDAEYIELPEVGTEFTAGDVLGVIESAKAASDVYIPVDGEVIEVNNAVAEDPSLVNSDPYGSWLVAVRLKDKAQVEKLMKAEEYKKFLET.

The 82-residue stretch at 22-103 folds into the Lipoyl-binding domain; that stretch reads KAYIGITDYA…PYGSWLVAVR (82 aa). K63 is subject to N6-lipoyllysine.

This sequence belongs to the GcvH family. As to quaternary structure, the glycine cleavage system is composed of four proteins: P, T, L and H. Requires (R)-lipoate as cofactor.

In terms of biological role, the glycine cleavage system catalyzes the degradation of glycine. The H protein shuttles the methylamine group of glycine from the P protein to the T protein. The polypeptide is Glycine cleavage system H protein 1 (Caldanaerobacter subterraneus subsp. tengcongensis (strain DSM 15242 / JCM 11007 / NBRC 100824 / MB4) (Thermoanaerobacter tengcongensis)).